Reading from the N-terminus, the 405-residue chain is L-rhamnonate dehydratase (405 aa).

His-33 and Arg-59 together coordinate substrate. The Mg(2+) site is built by Asp-226, Glu-252, and Glu-280. The Proton acceptor role is filled by His-329. Glu-349 serves as a coordination point for substrate.

This sequence belongs to the mandelate racemase/muconate lactonizing enzyme family. RhamD subfamily. In terms of assembly, homooctamer; tetramer of dimers. Mg(2+) serves as cofactor.

The enzyme catalyses L-rhamnonate = 2-dehydro-3-deoxy-L-rhamnonate + H2O. Its function is as follows. Catalyzes the dehydration of L-rhamnonate to 2-keto-3-deoxy-L-rhamnonate (KDR). The protein is L-rhamnonate dehydratase of Escherichia coli O6:K15:H31 (strain 536 / UPEC).